We begin with the raw amino-acid sequence, 264 residues long: MNLLNMFNGYKKIPVEYFAQEESMEQLKDINTKIDNSEKKISLENFIDKCEKSDPISENDFLDYPEHIVRSYVKHNVESFIDNNKTNLLNKLLILFPESVFYMASCEKFITIFSKVKDNINGLLINSDKQTFLHKILTLEDSMIILESNIDLNVNQIDINGDTFVSNYYDNIDALYKKNNNTNYENHHTSSKKMIKFVELLVKKNYNVNRVDNINRSIINLCFRVNVNKSIIFSYKNMAYKQQYFFIDYYCLYNLFQMKKLIPL.

Residues 19-45 (AQEESMEQLKDINTKIDNSEKKISLEN) are a coiled coil.

This is an uncharacterized protein from Acanthamoeba polyphaga mimivirus (APMV).